Consider the following 348-residue polypeptide: uncharacterized protein (348 aa).

This is an uncharacterized protein from Sulfolobus islandicus filamentous virus (isolate Iceland/Hveragerdi) (SIFV).